Here is a 573-residue protein sequence, read N- to C-terminus: Proline--tRNA ligase (573 aa).

The protein belongs to the class-II aminoacyl-tRNA synthetase family. ProS type 1 subfamily. In terms of assembly, homodimer.

Its subcellular location is the cytoplasm. The enzyme catalyses tRNA(Pro) + L-proline + ATP = L-prolyl-tRNA(Pro) + AMP + diphosphate. Catalyzes the attachment of proline to tRNA(Pro) in a two-step reaction: proline is first activated by ATP to form Pro-AMP and then transferred to the acceptor end of tRNA(Pro). As ProRS can inadvertently accommodate and process non-cognate amino acids such as alanine and cysteine, to avoid such errors it has two additional distinct editing activities against alanine. One activity is designated as 'pretransfer' editing and involves the tRNA(Pro)-independent hydrolysis of activated Ala-AMP. The other activity is designated 'posttransfer' editing and involves deacylation of mischarged Ala-tRNA(Pro). The misacylated Cys-tRNA(Pro) is not edited by ProRS. The sequence is that of Proline--tRNA ligase from Moorella thermoacetica (strain ATCC 39073 / JCM 9320).